We begin with the raw amino-acid sequence, 66 residues long: Large ribosomal subunit protein bL35 (66 aa).

A compositionally biased stretch (basic residues) spans 1–26 (MPKMKTHRGSAKRFKKTGSGKLKRSH). A disordered region spans residues 1–45 (MPKMKTHRGSAKRFKKTGSGKLKRSHAYTSHLFANKSQKQKRKLR).

The protein belongs to the bacterial ribosomal protein bL35 family.

The chain is Large ribosomal subunit protein bL35 from Bacillus velezensis (strain DSM 23117 / BGSC 10A6 / LMG 26770 / FZB42) (Bacillus amyloliquefaciens subsp. plantarum).